The sequence spans 797 residues: Protocadherin-3 (797 aa).

The N-terminal stretch at 1 to 30 (METALAKIPQQRQVFFLTILSLLWKSSSEA) is a signal peptide. Over 31–691 (IRYSMPEETE…DNYDVLTLYL (661 aa)) the chain is Extracellular. Cadherin domains are found at residues 35 to 133 (MPEE…SPEF), 138 to 242 (MLLT…SPQF), 247 to 346 (YKVQ…APEL), 351 to 450 (LTVL…APAF), and 455 to 560 (YTMF…APFV). N-linked (GlcNAc...) asparagine glycosylation is found at asparagine 169, asparagine 276, and asparagine 417. Asparagine 566 carries an N-linked (GlcNAc...) asparagine glycan. The region spanning 567–670 (ASAPCTELLP…VVDGFSQPYL (104 aa)) is the Cadherin 6 domain. Residues 692–712 (VIALASVSSLFLLSVVLFVGV) traverse the membrane as a helical segment. Over 713-797 (RLCRRAREAS…AVVHNSVGFY (85 aa)) the chain is Cytoplasmic.

As to expression, expressed in brain.

The protein localises to the cell membrane. Its function is as follows. Potential calcium-dependent cell-adhesion protein. May be involved in the establishment and maintenance of specific neuronal connections in the brain. The chain is Protocadherin-3 (Pcdh3) from Rattus norvegicus (Rat).